A 262-amino-acid chain; its full sequence is E3 ubiquitin-protein ligase NEURL3 (262 aa).

Residues 17–173 form the NHR domain; the sequence is ALRFHAEAKG…TTKAIELLDP (157 aa). The RING-type zinc-finger motif lies at 202 to 241; sequence CAICFYHAANTRLVPCGHTYFCRYCAWRVFSDTAKCPVCR.

(Microbial infection) Interacts with hepatitis C virus protein E1; this interaction prevents E1 interaction with E2 and subsequently inhibits viral infection.

The protein resides in the cytoplasm. The enzyme catalyses S-ubiquitinyl-[E2 ubiquitin-conjugating enzyme]-L-cysteine + [acceptor protein]-L-lysine = [E2 ubiquitin-conjugating enzyme]-L-cysteine + N(6)-ubiquitinyl-[acceptor protein]-L-lysine.. It functions in the pathway protein modification; protein ubiquitination. Its function is as follows. E3 ubiquitin-protein ligase that plays a role in various biological processes such as lung development or innate immunity. Seems to utilize UBE2E1. Promotes innate antiviral response by catalyzing 'Lys-63'-linked ubiquitination of IRF7. Also inhibits hepatitis C virus assembly by directly binding to viral E1 envelope glycoprotein to disrupt its interaction with E2. Plays an essential role in TLR4-mediated activation of MAPK pathways by promoting 'Lys-48'-linked polyubiquitination of the phosphatase DUSP1/MKP1. In Homo sapiens (Human), this protein is E3 ubiquitin-protein ligase NEURL3 (NEURL3).